The primary structure comprises 204 residues: MTRAFDGDTLLIATHNKGKLEEMAHLLQPFGVKVVGAAEMNLPEPEETEDTFVGNARIKAHAAARATGLPALSDDSGITIDALDGAPGVYTADWAETGNGRDFLMAMTRAHDALEAKSAPHPRLAQFRCTLVLAWPDGHDEVFEGVAPGHLVWPIRGAAGFGYDPMFVPEGYDVTFAEMDRWEKNKISHRARAVEKFVKGCFGG.

Position 14 to 19 (14 to 19) interacts with substrate; that stretch reads THNKGK. Mg(2+) contacts are provided by glutamate 46 and aspartate 75. The Proton acceptor role is filled by aspartate 75. Residues serine 76, 161-164, lysine 184, and 189-190 each bind substrate; these read FGYD and HR.

This sequence belongs to the HAM1 NTPase family. Homodimer. The cofactor is Mg(2+).

The catalysed reaction is XTP + H2O = XMP + diphosphate + H(+). It carries out the reaction dITP + H2O = dIMP + diphosphate + H(+). The enzyme catalyses ITP + H2O = IMP + diphosphate + H(+). Pyrophosphatase that catalyzes the hydrolysis of nucleoside triphosphates to their monophosphate derivatives, with a high preference for the non-canonical purine nucleotides XTP (xanthosine triphosphate), dITP (deoxyinosine triphosphate) and ITP. Seems to function as a house-cleaning enzyme that removes non-canonical purine nucleotides from the nucleotide pool, thus preventing their incorporation into DNA/RNA and avoiding chromosomal lesions. This chain is dITP/XTP pyrophosphatase, found in Ruegeria pomeroyi (strain ATCC 700808 / DSM 15171 / DSS-3) (Silicibacter pomeroyi).